The chain runs to 153 residues: Ribosome maturation factor RimP (153 aa).

It belongs to the RimP family.

It localises to the cytoplasm. Its function is as follows. Required for maturation of 30S ribosomal subunits. In Acidithiobacillus ferrooxidans (strain ATCC 53993 / BNL-5-31) (Leptospirillum ferrooxidans (ATCC 53993)), this protein is Ribosome maturation factor RimP.